We begin with the raw amino-acid sequence, 274 residues long: Large ribosomal subunit protein uL2 (274 aa).

2 disordered regions span residues 34-54 and 224-261; these read LEKKSKSGGRNNNGRITTRHI and VAMNPVDHPHGGGEGRTSGGRHPVSPWGFPTKGAKTRA.

It belongs to the universal ribosomal protein uL2 family. As to quaternary structure, part of the 50S ribosomal subunit. Forms a bridge to the 30S subunit in the 70S ribosome.

In terms of biological role, one of the primary rRNA binding proteins. Required for association of the 30S and 50S subunits to form the 70S ribosome, for tRNA binding and peptide bond formation. It has been suggested to have peptidyltransferase activity; this is somewhat controversial. Makes several contacts with the 16S rRNA in the 70S ribosome. The chain is Large ribosomal subunit protein uL2 from Ectopseudomonas mendocina (strain ymp) (Pseudomonas mendocina).